Consider the following 192-residue polypeptide: tRNA (cytidine(56)-2'-O)-methyltransferase (192 aa).

Residues leucine 84 and 112–116 (GGEKV) each bind S-adenosyl-L-methionine.

Belongs to the aTrm56 family. In terms of assembly, homodimer.

It is found in the cytoplasm. The catalysed reaction is cytidine(56) in tRNA + S-adenosyl-L-methionine = 2'-O-methylcytidine(56) in tRNA + S-adenosyl-L-homocysteine + H(+). Specifically catalyzes the AdoMet-dependent 2'-O-ribose methylation of cytidine at position 56 in tRNAs. In Halobacterium salinarum (strain ATCC 700922 / JCM 11081 / NRC-1) (Halobacterium halobium), this protein is tRNA (cytidine(56)-2'-O)-methyltransferase.